A 152-amino-acid chain; its full sequence is MESWLFLLAILVVAWLGKNQSLQIATVVVLLIKLIPNTSKLLTTIGQKGINWGVTVITVAILIPIATGQIGFRDLWHAFKSPVGWIAVACGVLVSVLSFHGVGLLSATPEITVALVFGTIMGVVLLKGIAAGPIIAAGITYCIIQVLHLSLQ.

Transmembrane regions (helical) follow at residues 25–45 (ATVV…LTTI), 52–72 (WGVT…QIGF), 85–105 (WIAV…VGLL), and 115–135 (LVFG…GPII).

This sequence belongs to the UPF0756 family.

The protein resides in the cell membrane. The chain is UPF0756 membrane protein JDM1_1594 from Lactiplantibacillus plantarum (strain JDM1) (Lactobacillus plantarum).